Here is a 94-residue protein sequence, read N- to C-terminus: Small ribosomal subunit protein bS18 (94 aa).

This sequence belongs to the bacterial ribosomal protein bS18 family. Part of the 30S ribosomal subunit. Forms a tight heterodimer with protein bS6.

Its function is as follows. Binds as a heterodimer with protein bS6 to the central domain of the 16S rRNA, where it helps stabilize the platform of the 30S subunit. This chain is Small ribosomal subunit protein bS18, found in Polaromonas sp. (strain JS666 / ATCC BAA-500).